A 236-amino-acid chain; its full sequence is Probable fimbrial chaperone EcpE (236 aa).

An N-terminal signal peptide occupies residues 1 to 27; the sequence is MFRRRGVTLTKALLTVVCMLAAPLTQA.

Belongs to the EcpB/EcpE family.

Part of the ecpRABCDE operon, which encodes the E.coli common pilus (ECP). ECP is found in both commensal and pathogenic strains and plays a dual role in early-stage biofilm development and host cell recognition. The protein is Probable fimbrial chaperone EcpE (ecpE) of Escherichia coli O18:K1:H7 (strain IHE3034 / ExPEC).